Consider the following 252-residue polypeptide: 3-dehydroquinate dehydratase (252 aa).

Residues serine 21, 46–48 (EWR), and arginine 82 contribute to the 3-dehydroquinate site. Histidine 143 acts as the Proton donor/acceptor in catalysis. The active-site Schiff-base intermediate with substrate is lysine 170. 3-dehydroquinate-binding residues include arginine 213, serine 232, and glutamine 236.

Belongs to the type-I 3-dehydroquinase family. Homodimer.

It catalyses the reaction 3-dehydroquinate = 3-dehydroshikimate + H2O. It participates in metabolic intermediate biosynthesis; chorismate biosynthesis; chorismate from D-erythrose 4-phosphate and phosphoenolpyruvate: step 3/7. Its function is as follows. Involved in the third step of the chorismate pathway, which leads to the biosynthesis of aromatic amino acids. Catalyzes the cis-dehydration of 3-dehydroquinate (DHQ) and introduces the first double bond of the aromatic ring to yield 3-dehydroshikimate. This is 3-dehydroquinate dehydratase from Escherichia coli O7:K1 (strain IAI39 / ExPEC).